The primary structure comprises 293 residues: HTH-type transcriptional regulator ArgP (293 aa).

An HTH lysR-type domain is found at 4-60 (PDYRTLQALDAVIRERGFERAAQKLCITQSAVSQRIKQLENLFGQPLLVRTIPPHPT). The H-T-H motif DNA-binding region spans 21–40 (FERAAQKLCITQSAVSQRIK).

Belongs to the LysR transcriptional regulatory family. In terms of assembly, homodimer.

Functionally, controls the transcription of genes involved in arginine and lysine metabolism. This chain is HTH-type transcriptional regulator ArgP, found in Sodalis glossinidius (strain morsitans).